Reading from the N-terminus, the 485-residue chain is NADH-quinone oxidoreductase subunit N (485 aa).

14 helical membrane-spanning segments follow: residues 8–28 (LIAL…MLSI), 35–55 (FLNA…LWFV), 71–91 (GFAM…CTFA), 105–125 (FYLL…ANHL), 127–147 (ALFL…GYAF), 159–179 (YTIL…LVYA), 203–223 (LLAG…LVPF), 235–255 (PAPV…GVVM), 271–291 (VVLG…ALSQ), 297–317 (LLGY…IALQ), 326–346 (VGVY…VVSL), 373–393 (AAVM…LGFI), 408–430 (WWLV…RVAV), and 455–475 (IVVL…QPLI).

It belongs to the complex I subunit 2 family. NDH-1 is composed of 13 different subunits. Subunits NuoA, H, J, K, L, M, N constitute the membrane sector of the complex.

The protein resides in the cell inner membrane. The enzyme catalyses a quinone + NADH + 5 H(+)(in) = a quinol + NAD(+) + 4 H(+)(out). Its function is as follows. NDH-1 shuttles electrons from NADH, via FMN and iron-sulfur (Fe-S) centers, to quinones in the respiratory chain. The immediate electron acceptor for the enzyme in this species is believed to be ubiquinone. Couples the redox reaction to proton translocation (for every two electrons transferred, four hydrogen ions are translocated across the cytoplasmic membrane), and thus conserves the redox energy in a proton gradient. In Salmonella dublin (strain CT_02021853), this protein is NADH-quinone oxidoreductase subunit N.